We begin with the raw amino-acid sequence, 207 residues long: dTTP/UTP pyrophosphatase (207 aa).

Asp-79 (proton acceptor) is an active-site residue.

It belongs to the Maf family. YhdE subfamily. It depends on a divalent metal cation as a cofactor.

The protein localises to the cytoplasm. It carries out the reaction dTTP + H2O = dTMP + diphosphate + H(+). It catalyses the reaction UTP + H2O = UMP + diphosphate + H(+). Nucleoside triphosphate pyrophosphatase that hydrolyzes dTTP and UTP. May have a dual role in cell division arrest and in preventing the incorporation of modified nucleotides into cellular nucleic acids. The protein is dTTP/UTP pyrophosphatase of Nitrobacter winogradskyi (strain ATCC 25391 / DSM 10237 / CIP 104748 / NCIMB 11846 / Nb-255).